Consider the following 1589-residue polypeptide: Pentafunctional AROM polypeptide (1589 aa).

Residues 1–384 (MAAPTTIKIL…HEQQASVVSN (384 aa)) form a 3-dehydroquinate synthase region. Residues 44–46 (DTT), 81–84 (ELSK), 114–116 (GGV), and D119 contribute to the NAD(+) site. Position 130 (R130) interacts with 7-phospho-2-dehydro-3-deoxy-D-arabino-heptonate. Residue 139–140 (TT) coordinates NAD(+). 7-phospho-2-dehydro-3-deoxy-D-arabino-heptonate-binding residues include D146 and K152. K161 is an NAD(+) binding site. Residue N162 coordinates 7-phospho-2-dehydro-3-deoxy-D-arabino-heptonate. NAD(+) contacts are provided by residues 179–182 (FLNT) and N190. E194 is a Zn(2+) binding site. 7-phospho-2-dehydro-3-deoxy-D-arabino-heptonate is bound by residues 194-197 (EVIK) and K250. E260 serves as the catalytic Proton acceptor; for 3-dehydroquinate synthase activity. Residues 264–268 (RNLLN) and H271 contribute to the 7-phospho-2-dehydro-3-deoxy-D-arabino-heptonate site. H271 lines the Zn(2+) pocket. H275 serves as the catalytic Proton acceptor; for 3-dehydroquinate synthase activity. Residues H287 and K356 each contribute to the 7-phospho-2-dehydro-3-deoxy-D-arabino-heptonate site. A Zn(2+)-binding site is contributed by H287. The interval 397–841 (VSPGVPKSLQ…WDTLAQLFKA (445 aa)) is EPSP synthase. The active-site For EPSP synthase activity is the C823. A shikimate kinase region spans residues 861 to 1052 (ASIFIIGMRG…KKKPQSFFVS (192 aa)). 867 to 874 (GMRGAGKT) contributes to the ATP binding site. The tract at residues 1053-1273 (LTLPDLRPSA…AAPGQLSAQD (221 aa)) is 3-dehydroquinase. The active-site Proton acceptor; for 3-dehydroquinate dehydratase activity is the H1176. The Schiff-base intermediate with substrate; for 3-dehydroquinate dehydratase activity role is filled by K1204. The tract at residues 1286 to 1589 (PRKFAIFGKP…VMNPGTDNRG (304 aa)) is shikimate dehydrogenase.

In the N-terminal section; belongs to the sugar phosphate cyclases superfamily. Dehydroquinate synthase family. The protein in the 2nd section; belongs to the EPSP synthase family. It in the 3rd section; belongs to the shikimate kinase family. This sequence in the 4th section; belongs to the type-I 3-dehydroquinase family. In the C-terminal section; belongs to the shikimate dehydrogenase family. As to quaternary structure, homodimer. Zn(2+) is required as a cofactor.

The protein localises to the cytoplasm. It carries out the reaction 7-phospho-2-dehydro-3-deoxy-D-arabino-heptonate = 3-dehydroquinate + phosphate. It catalyses the reaction 3-dehydroquinate = 3-dehydroshikimate + H2O. The catalysed reaction is shikimate + NADP(+) = 3-dehydroshikimate + NADPH + H(+). The enzyme catalyses shikimate + ATP = 3-phosphoshikimate + ADP + H(+). It carries out the reaction 3-phosphoshikimate + phosphoenolpyruvate = 5-O-(1-carboxyvinyl)-3-phosphoshikimate + phosphate. It functions in the pathway metabolic intermediate biosynthesis; chorismate biosynthesis; chorismate from D-erythrose 4-phosphate and phosphoenolpyruvate: step 2/7. The protein operates within metabolic intermediate biosynthesis; chorismate biosynthesis; chorismate from D-erythrose 4-phosphate and phosphoenolpyruvate: step 3/7. It participates in metabolic intermediate biosynthesis; chorismate biosynthesis; chorismate from D-erythrose 4-phosphate and phosphoenolpyruvate: step 4/7. Its pathway is metabolic intermediate biosynthesis; chorismate biosynthesis; chorismate from D-erythrose 4-phosphate and phosphoenolpyruvate: step 5/7. It functions in the pathway metabolic intermediate biosynthesis; chorismate biosynthesis; chorismate from D-erythrose 4-phosphate and phosphoenolpyruvate: step 6/7. The AROM polypeptide catalyzes 5 consecutive enzymatic reactions in prechorismate polyaromatic amino acid biosynthesis. This is Pentafunctional AROM polypeptide from Coccidioides posadasii (strain C735) (Valley fever fungus).